A 349-amino-acid chain; its full sequence is MNGTEGNNFYIPMSNRTGLVRSPYEYPQYYLAEPWQFKLLAVYMFFLMCFGFPINGLTLVVTAQHKKLRQPLNFILVNLAVAGTIMVCFGFTVTFYTAINGYFVLGPTGCAIEGFMATLGGQISLWSLVVLAIERYIVVCKPMGSFKFSSNHAFAGIGFTWIMALSCAAPPLVGWSRYIPEGMQCSCGPDYYTLNPDYNNESYVLYMFCCHFIFPVTTIFFTYGRLVCTVKAAAAQQQESESTQKAEREVTRMVILMVLGFLVAWTPYASVAAWIFFNRGAAFSAQFMAVPAFFSKSSSIFNPIIYVLLNKQFRNCMLTTLFCGKNPLGDDESSTVSTSKTEVSSVSPA.

Residues 1–36 (MNGTEGNNFYIPMSNRTGLVRSPYEYPQYYLAEPWQ) lie on the Extracellular side of the membrane. N-linked (GlcNAc...) asparagine glycosylation is found at Asn-2 and Asn-15. Residues 37-61 (FKLLAVYMFFLMCFGFPINGLTLVV) form a helical membrane-spanning segment. The Cytoplasmic segment spans residues 62-73 (TAQHKKLRQPLN). Residues 74–99 (FILVNLAVAGTIMVCFGFTVTFYTAI) traverse the membrane as a helical segment. The Extracellular portion of the chain corresponds to 100–113 (NGYFVLGPTGCAIE). Cysteines 110 and 187 form a disulfide. Residues 114–133 (GFMATLGGQISLWSLVVLAI) form a helical membrane-spanning segment. Residues 134 to 152 (ERYIVVCKPMGSFKFSSNH) are Cytoplasmic-facing. A helical membrane pass occupies residues 153 to 176 (AFAGIGFTWIMALSCAAPPLVGWS). Residues 177-202 (RYIPEGMQCSCGPDYYTLNPDYNNES) are Extracellular-facing. Asn-200 carries N-linked (GlcNAc...) asparagine glycosylation. The helical transmembrane segment at 203–230 (YVLYMFCCHFIFPVTTIFFTYGRLVCTV) threads the bilayer. Topologically, residues 231–252 (KAAAAQQQESESTQKAEREVTR) are cytoplasmic. The chain crosses the membrane as a helical span at residues 253–276 (MVILMVLGFLVAWTPYASVAAWIF). Over 277–284 (FNRGAAFS) the chain is Extracellular. The helical transmembrane segment at 285–309 (AQFMAVPAFFSKSSSIFNPIIYVLL) threads the bilayer. Lys-296 is modified (N6-(retinylidene)lysine). The Cytoplasmic portion of the chain corresponds to 310–349 (NKQFRNCMLTTLFCGKNPLGDDESSTVSTSKTEVSSVSPA). Residues 329-349 (GDDESSTVSTSKTEVSSVSPA) are disordered. The segment covering 334–349 (STVSTSKTEVSSVSPA) has biased composition (low complexity).

Belongs to the G-protein coupled receptor 1 family. Opsin subfamily. In terms of processing, phosphorylated on some or all of the serine and threonine residues present in the C-terminal region.

It is found in the membrane. Functionally, visual pigments are the light-absorbing molecules that mediate vision. They consist of an apoprotein, opsin, covalently linked to cis-retinal. This chain is Green-sensitive opsin-3 (opn1mw3), found in Danio rerio (Zebrafish).